We begin with the raw amino-acid sequence, 523 residues long: Maturase K (523 aa).

The protein belongs to the intron maturase 2 family. MatK subfamily.

Its subcellular location is the plastid. It localises to the chloroplast. Its function is as follows. Usually encoded in the trnK tRNA gene intron. Probably assists in splicing its own and other chloroplast group II introns. This is Maturase K from Asphodeline lutea (King's spear).